We begin with the raw amino-acid sequence, 537 residues long: CWF19-like protein 1 (537 aa).

The tract at residues 297-323 is disordered; sequence KQGRKRPSTGRDTRPPHAKQPRKPPQP.

It belongs to the CWF19 family.

This is CWF19-like protein 1 (Cwf19l1) from Mus musculus (Mouse).